The chain runs to 139 residues: Acidic phospholipase A2 5 (139 aa).

Residues 1–16 form the signal peptide; sequence MRTLWIVAVWLMGVEG. 7 disulfide bridges follow: Cys42–Cys131, Cys44–Cys60, Cys59–Cys111, Cys65–Cys139, Cys66–Cys104, Cys73–Cys97, and Cys91–Cys102. 3 residues coordinate Ca(2+): Tyr43, Gly45, and Gly47. Residue His63 is part of the active site. Asp64 provides a ligand contact to Ca(2+). Asp105 is a catalytic residue.

Belongs to the phospholipase A2 family. Group II subfamily. D49 sub-subfamily. Requires Ca(2+) as cofactor. Expressed by the venom gland.

The protein resides in the secreted. The catalysed reaction is a 1,2-diacyl-sn-glycero-3-phosphocholine + H2O = a 1-acyl-sn-glycero-3-phosphocholine + a fatty acid + H(+). PLA2 catalyzes the calcium-dependent hydrolysis of the 2-acyl groups in 3-sn-phosphoglycerides. The polypeptide is Acidic phospholipase A2 5 (Echis pyramidum leakeyi (Leakey's carpet viper)).